A 429-amino-acid chain; its full sequence is Proton extrusion protein PxcA (429 aa).

The tract at residues 139-161 (LNGPEAPQTNGDRPDNKPKVETV) is disordered. Over residues 150 to 161 (DRPDNKPKVETV) the composition is skewed to basic and acidic residues. Helical transmembrane passes span 211–231 (FLLTLVIVPLLVHQLAKIAIT), 306–326 (AYENIFSDIFSFFAFVGILLI), 353–373 (LIILFTDIFVGYHSPHGWEII), and 389–409 (FNFLFIATFPVILDTVLKYWI).

It belongs to the CemA family.

It is found in the cell inner membrane. Functionally, required for H(+) efflux immediately after light irradiation to form a rapid H(+) concentration gradient across the thylakoid membranes. Together with PxcL, contributes to transient H(+) uptake following dark to light transition. In Picosynechococcus sp. (strain ATCC 27264 / PCC 7002 / PR-6) (Agmenellum quadruplicatum), this protein is Proton extrusion protein PxcA.